The chain runs to 291 residues: Pyridoxal 5'-phosphate synthase subunit PdxS (291 aa).

Residue Asp-23 coordinates D-ribose 5-phosphate. Lys-80 functions as the Schiff-base intermediate with D-ribose 5-phosphate in the catalytic mechanism. Gly-152 is a binding site for D-ribose 5-phosphate. Residue Arg-164 coordinates D-glyceraldehyde 3-phosphate. D-ribose 5-phosphate-binding positions include Gly-213 and 234–235 (GS).

The protein belongs to the PdxS/SNZ family. In the presence of PdxT, forms a dodecamer of heterodimers.

It carries out the reaction aldehydo-D-ribose 5-phosphate + D-glyceraldehyde 3-phosphate + L-glutamine = pyridoxal 5'-phosphate + L-glutamate + phosphate + 3 H2O + H(+). It functions in the pathway cofactor biosynthesis; pyridoxal 5'-phosphate biosynthesis. Its function is as follows. Catalyzes the formation of pyridoxal 5'-phosphate from ribose 5-phosphate (RBP), glyceraldehyde 3-phosphate (G3P) and ammonia. The ammonia is provided by the PdxT subunit. Can also use ribulose 5-phosphate and dihydroxyacetone phosphate as substrates, resulting from enzyme-catalyzed isomerization of RBP and G3P, respectively. The protein is Pyridoxal 5'-phosphate synthase subunit PdxS of Desulfitobacterium hafniense (strain DSM 10664 / DCB-2).